The sequence spans 180 residues: Large ribosomal subunit protein uL6 (180 aa).

It belongs to the universal ribosomal protein uL6 family. In terms of assembly, part of the 50S ribosomal subunit.

In terms of biological role, this protein binds to the 23S rRNA, and is important in its secondary structure. It is located near the subunit interface in the base of the L7/L12 stalk, and near the tRNA binding site of the peptidyltransferase center. The sequence is that of Large ribosomal subunit protein uL6 from Clostridium tetani (strain Massachusetts / E88).